Reading from the N-terminus, the 326-residue chain is Cinnamoyl-CoA reductase CAD2 (326 aa).

NADP(+)-binding positions include 14 to 20 (GASGYIA), R39, K46, 66 to 67 (NL), and 86 to 88 (TAS). Residues S130, Y136, R141, and Y165 each contribute to the (E)-coniferaldehyde site. Residues Y165, K169, 192 to 195 (PAMV), and S207 contribute to the NADP(+) site. K169 functions as the Proton donor in the catalytic mechanism. Residues M194, S207, F226, V257, and Y290 each contribute to the (E)-coniferaldehyde site.

The protein belongs to the NAD(P)-dependent epimerase/dehydratase family. Dihydroflavonol-4-reductase subfamily.

It localises to the cytoplasm. The enzyme catalyses (E)-cinnamaldehyde + NADP(+) + CoA = (E)-cinnamoyl-CoA + NADPH + H(+). The catalysed reaction is (E)-coniferaldehyde + NADP(+) + CoA = (E)-feruloyl-CoA + NADPH + H(+). It catalyses the reaction (E)-4-coumaraldehyde + NADP(+) + CoA = (E)-4-coumaroyl-CoA + NADPH + H(+). It functions in the pathway aromatic compound metabolism; phenylpropanoid biosynthesis. Functionally, involved in lignin biosynthesis. Regulates the monolignol composition by catalyzing the conversion of cinnamoyl-CoAs into their corresponding cinnamaldehydes. Can use coumaraldehyde and coniferaldehyde as substrates, but barely sinapaldehyde. The protein is Cinnamoyl-CoA reductase CAD2 of Medicago truncatula (Barrel medic).